A 123-amino-acid polypeptide reads, in one-letter code: Small ribosomal subunit protein uS12 (123 aa).

A disordered region spans residues Met-1–Pro-28. Asp-89 is subject to 3-methylthioaspartic acid. The tract at residues Thr-104–Lys-123 is disordered. Residues Lys-108–Lys-123 are compositionally biased toward basic residues.

This sequence belongs to the universal ribosomal protein uS12 family. Part of the 30S ribosomal subunit. Contacts proteins S8 and S17. May interact with IF1 in the 30S initiation complex.

With S4 and S5 plays an important role in translational accuracy. In terms of biological role, interacts with and stabilizes bases of the 16S rRNA that are involved in tRNA selection in the A site and with the mRNA backbone. Located at the interface of the 30S and 50S subunits, it traverses the body of the 30S subunit contacting proteins on the other side and probably holding the rRNA structure together. The combined cluster of proteins S8, S12 and S17 appears to hold together the shoulder and platform of the 30S subunit. This is Small ribosomal subunit protein uS12 from Hyphomonas neptunium (strain ATCC 15444).